Consider the following 279-residue polypeptide: S-methyl-5'-thioadenosine phosphorylase (279 aa).

Phosphate contacts are provided by residues S13, 55 to 56 (RH), and 88 to 89 (TA). A substrate-binding site is contributed by M191. T192 is a phosphate binding site. Substrate is bound at residue 215–217 (DYD).

This sequence belongs to the PNP/MTAP phosphorylase family. MTAP subfamily. As to quaternary structure, homotrimer.

The protein localises to the cytoplasm. It localises to the nucleus. The catalysed reaction is S-methyl-5'-thioadenosine + phosphate = 5-(methylsulfanyl)-alpha-D-ribose 1-phosphate + adenine. The protein operates within amino-acid biosynthesis; L-methionine biosynthesis via salvage pathway; S-methyl-5-thio-alpha-D-ribose 1-phosphate from S-methyl-5'-thioadenosine (phosphorylase route): step 1/1. Its function is as follows. Catalyzes the reversible phosphorylation of S-methyl-5'-thioadenosine (MTA) to adenine and 5-methylthioribose-1-phosphate. Involved in the breakdown of MTA, a major by-product of polyamine biosynthesis. Responsible for the first step in the methionine salvage pathway after MTA has been generated from S-adenosylmethionine. Has broad substrate specificity with 6-aminopurine nucleosides as preferred substrates. This is S-methyl-5'-thioadenosine phosphorylase from Anopheles darlingi (Mosquito).